We begin with the raw amino-acid sequence, 20 residues long: Cytochrome c oxidase subunit 7B-heart, mitochondrial (20 aa).

It belongs to the cytochrome c oxidase VIIb family. In terms of assembly, component of the cytochrome c oxidase (complex IV, CIV), a multisubunit enzyme composed of 14 subunits. The complex is composed of a catalytic core of 3 subunits MT-CO1, MT-CO2 and MT-CO3, encoded in the mitochondrial DNA, and 11 supernumerary subunits COX4I, COX5A, COX5B, COX6A, COX6B, COX6C, COX7A, COX7B, COX7C, COX8 and NDUFA4, which are encoded in the nuclear genome. The complex exists as a monomer or a dimer and forms supercomplexes (SCs) in the inner mitochondrial membrane with NADH-ubiquinone oxidoreductase (complex I, CI) and ubiquinol-cytochrome c oxidoreductase (cytochrome b-c1 complex, complex III, CIII), resulting in different assemblies (supercomplex SCI(1)III(2)IV(1) and megacomplex MCI(2)III(2)IV(2)).

It localises to the mitochondrion inner membrane. It carries out the reaction 4 Fe(II)-[cytochrome c] + O2 + 8 H(+)(in) = 4 Fe(III)-[cytochrome c] + 2 H2O + 4 H(+)(out). It participates in energy metabolism; oxidative phosphorylation. Component of the cytochrome c oxidase, the last enzyme in the mitochondrial electron transport chain which drives oxidative phosphorylation. The respiratory chain contains 3 multisubunit complexes succinate dehydrogenase (complex II, CII), ubiquinol-cytochrome c oxidoreductase (cytochrome b-c1 complex, complex III, CIII) and cytochrome c oxidase (complex IV, CIV), that cooperate to transfer electrons derived from NADH and succinate to molecular oxygen, creating an electrochemical gradient over the inner membrane that drives transmembrane transport and the ATP synthase. Cytochrome c oxidase is the component of the respiratory chain that catalyzes the reduction of oxygen to water. Electrons originating from reduced cytochrome c in the intermembrane space (IMS) are transferred via the dinuclear copper A center (CU(A)) of subunit 2 and heme A of subunit 1 to the active site in subunit 1, a binuclear center (BNC) formed by heme A3 and copper B (CU(B)). The BNC reduces molecular oxygen to 2 water molecules using 4 electrons from cytochrome c in the IMS and 4 protons from the mitochondrial matrix. The polypeptide is Cytochrome c oxidase subunit 7B-heart, mitochondrial (Thunnus obesus (Bigeye tuna)).